We begin with the raw amino-acid sequence, 452 residues long: Isocitrate dehydrogenase [NADP], mitochondrial (452 aa).

The transit peptide at Met1–Tyr39 directs the protein to the mitochondrion. 4 positions are modified to N6-acetyllysine: Lys45, Lys48, Lys67, and Lys69. Lys80 and Lys106 each carry N6-acetyllysine; alternate. 2 positions are modified to N6-succinyllysine; alternate: Lys80 and Lys106. NADP(+)-binding positions include Thr115 to Thr117 and Arg122. Substrate is bound at residue Thr117. Substrate-binding positions include Ser134 to Arg140 and Arg149. The residue at position 155 (Lys155) is an N6-acetyllysine. Lys166 carries the N6-acetyllysine; alternate modification. Lys166 bears the N6-succinyllysine; alternate mark. Arg172 is a substrate binding site. N6-acetyllysine; alternate occurs at positions 180 and 193. Lys180 and Lys193 each carry N6-succinyllysine; alternate. An N6-acetyllysine modification is found at Lys199. N6-acetyllysine; alternate is present on Lys256. Lys256 is modified (N6-succinyllysine; alternate). An N6-acetyllysine mark is found at Lys263, Lys272, Lys275, and Lys280. Lys282 carries the N6-acetyllysine; alternate modification. N6-succinyllysine; alternate is present on Lys282. Asp291 serves as a coordination point for Mn(2+). NADP(+) is bound at residue Lys299. Asp314 contributes to the Mn(2+) binding site. NADP(+) contacts are provided by residues Gly349–His354 and Asn367. An N6-acetyllysine; alternate modification is found at Lys384. Lys384 bears the N6-succinyllysine; alternate mark. Lys400, Lys413, and Lys442 each carry N6-acetyllysine.

The protein belongs to the isocitrate and isopropylmalate dehydrogenases family. Homodimer. The cofactor is Mg(2+). Mn(2+) is required as a cofactor. Post-translationally, acetylation at Lys-413 dramatically reduces catalytic activity. Deacetylated by SIRT3.

It localises to the mitochondrion. The enzyme catalyses D-threo-isocitrate + NADP(+) = 2-oxoglutarate + CO2 + NADPH. Plays a role in intermediary metabolism and energy production. It may tightly associate or interact with the pyruvate dehydrogenase complex. In Macaca fascicularis (Crab-eating macaque), this protein is Isocitrate dehydrogenase [NADP], mitochondrial (IDH2).